Reading from the N-terminus, the 445-residue chain is METIFAQSSAFGKAGVAVFRISGPKSLEVLQLLTGRKDFKSRLMYYQQITVPETKELIDNVMVVYFKSPGSFTGEDVVEIHTHGSKAISIMLTNALLNIAGIRLAEAGEFTKRAFLNNKLDLTAAEGIADLINAETIMQHKQAIRQASGKLEALYNNWRSQLLKILSLLEAYIDFPDEDIPDTVLNEVTNTHTILVNTISEYLNDNRKGELLRSGLKLAIIGPPNVGKSSLLNFLMQRDIAIVSNIAGTTRDIIEGHLDIGGYPIILQDTAGIREESSDIIEQEGIKRAINSAKTADIKIIMFDAEKLDSSINEDIINLIDENTITIINKIDLIEASKIFSIENKYKCLRVSVKNNIALSSILKNIENIAENMAGFTETPYITNQRHRNYLQQALSHLTAFSLDNDLVLATEDIRMTARCIGAITGVINVEEILGEIFKNFCIGK.

(6S)-5-formyl-5,6,7,8-tetrahydrofolate-binding residues include arginine 20, glutamate 79, and lysine 119. The region spanning 215–371 (GLKLAIIGPP…ILKNIENIAE (157 aa)) is the TrmE-type G domain. Asparagine 225 serves as a coordination point for K(+). Residues 225 to 230 (NVGKSS), 244 to 250 (SNIAGTT), and 269 to 272 (DTAG) contribute to the GTP site. Residue serine 229 participates in Mg(2+) binding. K(+)-binding residues include serine 244, isoleucine 246, and threonine 249. Threonine 250 contributes to the Mg(2+) binding site. Lysine 445 contacts (6S)-5-formyl-5,6,7,8-tetrahydrofolate.

It belongs to the TRAFAC class TrmE-Era-EngA-EngB-Septin-like GTPase superfamily. TrmE GTPase family. Homodimer. Heterotetramer of two MnmE and two MnmG subunits. It depends on K(+) as a cofactor.

Its subcellular location is the cytoplasm. Functionally, exhibits a very high intrinsic GTPase hydrolysis rate. Involved in the addition of a carboxymethylaminomethyl (cmnm) group at the wobble position (U34) of certain tRNAs, forming tRNA-cmnm(5)s(2)U34. This is tRNA modification GTPase MnmE from Rickettsia rickettsii (strain Iowa).